The sequence spans 68 residues: Putative transcript Y 10 protein (68 aa).

The polypeptide is Putative transcript Y 10 protein (TTTY10) (Homo sapiens (Human)).